A 997-amino-acid polypeptide reads, in one-letter code: MSSNTVAQFATELKMPANVLLEQLRAAGVDLKSVDDAVTDSDKAKLLESLRRAHGATEGKKITLTRRQTSEIRQADATGRSRTIQVEVRKKRVFVKRDPAELAAEQAAARAEEAAAEAVPAEAAPAPAEPVRAEPAVETAAKPVEPPVAEAPAEPVAAPAAEPQPEQPAQAEAQPEPTPAAQAEPEPQPEPQPEAAPAQAVAEPVEPAKNVSVTETEAEQARPEPVVHAQTELTSQTPTPVAQPSAPAESPKSVKAEPAAAPKTTAKPGEIRRAAAPAAPDRAREEARRAAEAEAAALREMLSRPRKVLRAPEPEPQAGALSGTLHKPAGKPATTAAPKKDAKPGAPGAKKTIKTAEVSSTWSDDSARKKPADNKPAVATRDGWRAGGKGGRGGRNSRNQHQDRRHEQVQQEFIAREIHVPETISVADLAHKMSVKAAEVIKQLMKLGQMVTINQVLDQETAMIVVQEFGHTAIAAKLDDPEAFLDETAAVTEAEAEPRAPVVTVMGHVDHGKTSLLDYIRRAKVASGEAGGITQHIGAYHVETGRGVVTFLDTPGHEAFTAMRARGAKATDIVILVVAADDGVMPQTREAIHHAKAGGVPLVVAVNKIDKPEANPERVKQELVAEEVVPEEYGGDVPFVPVSAKTGAGIDDLLENVLLQAEILELKAPIEAPAKGLVIEARLDKGRGPVATILVQSGTLKRGDVVLAGASFGRVRAMLDENGKQIQTAGPSIPVEIQGLTEVPAAGDELMVLSDERKAREIALFRQGKFRDVKLARQQAANLESMFDNLGEGTQTLALIVKTDVQGSQEALVSSLTKLSTDEVRVQVVHAAVGGISESDVNLAIASNAVVIGFNVRAEQSAKKLAETNGIDLRYYNIIYDAVDEVKAAMSGMLAPEKREEVIGLVEVREVYTISRIGTVAGCMVLDGVVRRDSQVRLLRNNVVQWTGHLDSLRRFKDDVKEVKSGFDCGLTLRGNNDLQLGDQLEVFEIKEIARTL.

The interval 101–406 (ELAAEQAAAR…SRNQHQDRRH (306 aa)) is disordered. 2 stretches are compositionally biased toward low complexity: residues 116–185 (AEAV…QAEP) and 195–209 (AAPA…EPAK). Over residues 231 to 242 (TELTSQTPTPVA) the composition is skewed to polar residues. Low complexity predominate over residues 256-280 (AEPAAAPKTTAKPGEIRRAAAPAAP). Residues 281–292 (DRAREEARRAAE) are compositionally biased toward basic and acidic residues. Residues 385–394 (RAGGKGGRGG) show a composition bias toward gly residues. The tr-type G domain maps to 498 to 665 (PRAPVVTVMG…NVLLQAEILE (168 aa)). Residues 507 to 514 (GHVDHGKT) are G1. 507-514 (GHVDHGKT) contributes to the GTP binding site. A G2 region spans residues 532 to 536 (GITQH). The tract at residues 553 to 556 (DTPG) is G3. GTP is bound by residues 553 to 557 (DTPGH) and 607 to 610 (NKID). Positions 607–610 (NKID) are G4. The G5 stretch occupies residues 643–645 (SAK).

The protein belongs to the TRAFAC class translation factor GTPase superfamily. Classic translation factor GTPase family. IF-2 subfamily.

The protein localises to the cytoplasm. Its function is as follows. One of the essential components for the initiation of protein synthesis. Protects formylmethionyl-tRNA from spontaneous hydrolysis and promotes its binding to the 30S ribosomal subunits. Also involved in the hydrolysis of GTP during the formation of the 70S ribosomal complex. This Bordetella pertussis (strain Tohama I / ATCC BAA-589 / NCTC 13251) protein is Translation initiation factor IF-2.